We begin with the raw amino-acid sequence, 100 residues long: C-X-C motif chemokine 3 (100 aa).

A signal peptide spans 1–31; the sequence is MAPPTCRLLSAALVLLLLLATNHQATGAVVA. 2 disulfides stabilise this stretch: cysteine 36/cysteine 62 and cysteine 38/cysteine 78.

Belongs to the intercrine alpha (chemokine CxC) family.

It localises to the secreted. Ligand for CXCR2. Has chemotactic activity for neutrophils. May play a role in inflammation and exert its effects on endothelial cells in an autocrine fashion. The chain is C-X-C motif chemokine 3 from Mus musculus (Mouse).